We begin with the raw amino-acid sequence, 332 residues long: GTP 3',8-cyclase (332 aa).

In terms of domain architecture, Radical SAM core spans 9-220 (GYNRRVDYLR…TQVRERIAER (212 aa)). Arginine 18 lines the GTP pocket. Residues cysteine 25 and cysteine 29 each contribute to the [4Fe-4S] cluster site. S-adenosyl-L-methionine is bound at residue tyrosine 31. Cysteine 32 contributes to the [4Fe-4S] cluster binding site. Arginine 67 is a binding site for GTP. S-adenosyl-L-methionine is bound at residue glycine 71. Threonine 98 serves as a coordination point for GTP. Serine 122 contacts S-adenosyl-L-methionine. GTP is bound at residue lysine 159. Residue methionine 193 coordinates S-adenosyl-L-methionine. Residues cysteine 258 and cysteine 261 each coordinate [4Fe-4S] cluster. 263–265 (RVR) serves as a coordination point for GTP. Cysteine 275 contacts [4Fe-4S] cluster.

The protein belongs to the radical SAM superfamily. MoaA family. As to quaternary structure, monomer and homodimer. [4Fe-4S] cluster is required as a cofactor.

The catalysed reaction is GTP + AH2 + S-adenosyl-L-methionine = (8S)-3',8-cyclo-7,8-dihydroguanosine 5'-triphosphate + 5'-deoxyadenosine + L-methionine + A + H(+). It participates in cofactor biosynthesis; molybdopterin biosynthesis. Catalyzes the cyclization of GTP to (8S)-3',8-cyclo-7,8-dihydroguanosine 5'-triphosphate. In Pseudomonas fluorescens (strain Pf0-1), this protein is GTP 3',8-cyclase.